Consider the following 946-residue polypeptide: Bifunctional glutamine synthetase adenylyltransferase/adenylyl-removing enzyme (946 aa).

The segment at 1-440 is adenylyl removase; it reads MKPLSSPLQQ…VFNELIGDDE (440 aa). The segment at 449–946 is adenylyl transferase; the sequence is SEQWRELWQD…ASWQKWLVEE (498 aa).

It belongs to the GlnE family. Mg(2+) is required as a cofactor.

It catalyses the reaction [glutamine synthetase]-O(4)-(5'-adenylyl)-L-tyrosine + phosphate = [glutamine synthetase]-L-tyrosine + ADP. It carries out the reaction [glutamine synthetase]-L-tyrosine + ATP = [glutamine synthetase]-O(4)-(5'-adenylyl)-L-tyrosine + diphosphate. Its function is as follows. Involved in the regulation of glutamine synthetase GlnA, a key enzyme in the process to assimilate ammonia. When cellular nitrogen levels are high, the C-terminal adenylyl transferase (AT) inactivates GlnA by covalent transfer of an adenylyl group from ATP to specific tyrosine residue of GlnA, thus reducing its activity. Conversely, when nitrogen levels are low, the N-terminal adenylyl removase (AR) activates GlnA by removing the adenylyl group by phosphorolysis, increasing its activity. The regulatory region of GlnE binds the signal transduction protein PII (GlnB) which indicates the nitrogen status of the cell. The chain is Bifunctional glutamine synthetase adenylyltransferase/adenylyl-removing enzyme from Shigella sonnei (strain Ss046).